Consider the following 507-residue polypeptide: ATP synthase subunit alpha, plastid (507 aa).

170–177 (GDRQTGKT) contacts ATP.

The protein belongs to the ATPase alpha/beta chains family. F-type ATPases have 2 components, CF(1) - the catalytic core - and CF(0) - the membrane proton channel. CF(1) has five subunits: alpha(3), beta(3), gamma(1), delta(1), epsilon(1). CF(0) has four main subunits: a, b, b' and c.

Its subcellular location is the plastid membrane. It carries out the reaction ATP + H2O + 4 H(+)(in) = ADP + phosphate + 5 H(+)(out). In terms of biological role, produces ATP from ADP in the presence of a proton gradient across the membrane. The alpha chain is a regulatory subunit. The polypeptide is ATP synthase subunit alpha, plastid (Aneura mirabilis (Parasitic liverwort)).